A 99-amino-acid chain; its full sequence is MRRALSLLARLPRLLLIGLVRLYQLVLSPHLGRTCRFHPTCSAYAIQAFREYGALKGLVLTVHRLLRCHPWGGHGYDPPRWFDEEHPAADGRPQAAEEQ.

The protein belongs to the UPF0161 family.

The protein localises to the cell inner membrane. Functionally, could be involved in insertion of integral membrane proteins into the membrane. The protein is Putative membrane protein insertion efficiency factor of Salinibacter ruber (strain DSM 13855 / M31).